We begin with the raw amino-acid sequence, 781 residues long: Acyl-CoA dehydrogenase family member 11 (781 aa).

Lysine 177 carries the post-translational modification N6-acetyllysine. At tyrosine 325 the chain carries Phosphotyrosine. Lysine 392 carries the post-translational modification N6-succinyllysine. Residues 505–515 (FCMTEPDVASS), 513–515 (ASS), 539–541 (WSS), and serine 541 each bind FAD. Residue serine 515 coordinates substrate. Substrate is bound at residue 630 to 633 (GPGR). FAD is bound by residues arginine 658, glutamine 728, and 728–732 (QVCGG). Glycine 756 is a binding site for substrate. FAD-binding positions include 757–759 (PDE) and glutamate 759.

It belongs to the acyl-CoA dehydrogenase family. Homodimer. FAD serves as cofactor.

The protein resides in the peroxisome. Its subcellular location is the mitochondrion membrane. The catalysed reaction is a 2,3-saturated acyl-CoA + oxidized [electron-transfer flavoprotein] + H(+) = a (2E)-enoyl-CoA + reduced [electron-transfer flavoprotein]. It catalyses the reaction docosanoyl-CoA + oxidized [electron-transfer flavoprotein] + H(+) = (2E)-docosenoyl-CoA + reduced [electron-transfer flavoprotein]. It carries out the reaction tetracosanoyl-CoA + oxidized [electron-transfer flavoprotein] + H(+) = (2E)-tetracosenoyl-CoA + reduced [electron-transfer flavoprotein]. The enzyme catalyses eicosanoyl-CoA + oxidized [electron-transfer flavoprotein] + H(+) = (2E)-eicosenoyl-CoA + reduced [electron-transfer flavoprotein]. The catalysed reaction is hexacosanoyl-CoA + oxidized [electron-transfer flavoprotein] + H(+) = (2E)-hexacosenoyl-CoA + reduced [electron-transfer flavoprotein]. It catalyses the reaction tricosanoyl-CoA + oxidized [electron-transfer flavoprotein] + H(+) = (2E)-tricosenoyl-CoA + reduced [electron-transfer flavoprotein]. Its pathway is lipid metabolism; fatty acid beta-oxidation. Its function is as follows. Acyl-CoA dehydrogenase, that exhibits maximal activity towards saturated C22-CoA. Probably participates in beta-oxydation and energy production but could also play a role in the metabolism of specific fatty acids to control fatty acids composition of cellular lipids in brain. In Pongo abelii (Sumatran orangutan), this protein is Acyl-CoA dehydrogenase family member 11 (ACAD11).